The sequence spans 28 residues: Conotoxin Cal6.43b (28 aa).

3 disulfides stabilise this stretch: cysteine 3–cysteine 13, cysteine 7–cysteine 19, and cysteine 12–cysteine 25.

As to expression, expressed by the venom duct.

The protein localises to the secreted. Its function is as follows. Probable neurotoxin with unknown target. Possibly targets ion channels. This chain is Conotoxin Cal6.43b, found in Californiconus californicus (California cone).